A 792-amino-acid chain; its full sequence is Putative cellulose synthase-like protein H3 (792 aa).

The next 2 helical transmembrane spans lie at 25–45 and 55–75; these read AWMLANFVVLFLLLALLVRRA and VGGAAWRVAFACEAWFAFVWL. Residues 132-154 form a disordered region; the sequence is GRHVRDDGGPGARAAGGDGEQGA. The segment covering 140 to 151 has biased composition (gly residues); the sequence is GPGARAAGGDGE. Residues D181 and D501 contribute to the active site. 6 consecutive transmembrane segments (helical) span residues 579-599, 613-632, 650-670, 706-726, 739-759, and 768-788; these read VWAVRGFVELCYELLVPYCLL, FNITLALFLTYNTYNFVEYM, IISASAWLLAFFTVLLKTIGL, VFIPVTALTMLNIVAITIGTW, GPGISEFMSCGWLLLCLLPFV, and YGIPWSVKLKASLLVALFLFC.

It belongs to the glycosyltransferase 2 family. Plant cellulose synthase-like H subfamily.

Its subcellular location is the golgi apparatus membrane. Functionally, thought to be a Golgi-localized beta-glycan synthase that polymerize the backbones of noncellulosic polysaccharides (hemicelluloses) of plant cell wall. In Oryza sativa subsp. japonica (Rice), this protein is Putative cellulose synthase-like protein H3 (CSLH3).